The following is a 153-amino-acid chain: Small ribosomal subunit protein uS5 (153 aa).

The S5 DRBM domain occupies 15–78 (FQEVVVNVGR…DDAFKNLIHV (64 aa)).

This sequence belongs to the universal ribosomal protein uS5 family. As to quaternary structure, part of the 30S ribosomal subunit. Contacts proteins S4 and S8.

Functionally, with S4 and S12 plays an important role in translational accuracy. Its function is as follows. Located at the back of the 30S subunit body where it stabilizes the conformation of the head with respect to the body. The chain is Small ribosomal subunit protein uS5 from Helicobacter acinonychis (strain Sheeba).